Reading from the N-terminus, the 68-residue chain is ATP synthase subunit c (68 aa).

2 helical membrane passes run A5–V25 and F47–V67.

It belongs to the ATPase C chain family. As to quaternary structure, F-type ATPases have 2 components, F(1) - the catalytic core - and F(0) - the membrane proton channel. F(1) has five subunits: alpha(3), beta(3), gamma(1), delta(1), epsilon(1). F(0) has three main subunits: a(1), b(2) and c(10-14). The alpha and beta chains form an alternating ring which encloses part of the gamma chain. F(1) is attached to F(0) by a central stalk formed by the gamma and epsilon chains, while a peripheral stalk is formed by the delta and b chains.

It localises to the cell membrane. Its function is as follows. F(1)F(0) ATP synthase produces ATP from ADP in the presence of a proton or sodium gradient. F-type ATPases consist of two structural domains, F(1) containing the extramembraneous catalytic core and F(0) containing the membrane proton channel, linked together by a central stalk and a peripheral stalk. During catalysis, ATP synthesis in the catalytic domain of F(1) is coupled via a rotary mechanism of the central stalk subunits to proton translocation. Functionally, key component of the F(0) channel; it plays a direct role in translocation across the membrane. A homomeric c-ring of between 10-14 subunits forms the central stalk rotor element with the F(1) delta and epsilon subunits. The sequence is that of ATP synthase subunit c from Oceanobacillus iheyensis (strain DSM 14371 / CIP 107618 / JCM 11309 / KCTC 3954 / HTE831).